Reading from the N-terminus, the 429-residue chain is MRAMQTHTEIAPMPIPGHVDPVPVPREVTPREDGRIDLIGLPRKQIAELFAQAGLDAKAAKLRAKQVFHWLYHRGVTDFDAMTDIAKTMRPWLAERFVIGRPEIVEAQVSTDGTRKWLLRTADKHDFEMVFIPDADRGTLCVSSQVGCTLNCRFCHTGTMRLVRNLTPGEIVGQVMLARDALGEWPKGANDSRVATMAGLDFDDEDEGSYTSDGRLLTNIVMMGMGEPLYNFDNVRDALKLVMDGDGLALSKRRITLSTSGVVPMMERCGEEIGVNLAVSLHAVTKDVRDEIVPINRKYGIEELLQACADYPGASNARRITFEYVMLKDKNDSDDHARELVRLIRQYKLPAKVNLIPFNPWPGAPYECSSPDRIKSFANIVFEAGISAPVRTPRGRDIDAACGQLKTASERKSRAELDRLAEEKLAALG.

The interval 1–23 (MRAMQTHTEIAPMPIPGHVDPVP) is disordered. Glu128 functions as the Proton acceptor in the catalytic mechanism. Positions 134-397 (DADRGTLCVS…APVRTPRGRD (264 aa)) constitute a Radical SAM core domain. Cys141 and Cys402 are disulfide-bonded. [4Fe-4S] cluster contacts are provided by Cys148, Cys152, and Cys155. Residues 226-227 (GE), Ser258, 280-282 (SLH), and Asn359 each bind S-adenosyl-L-methionine. Residue Cys402 is the S-methylcysteine intermediate of the active site.

This sequence belongs to the radical SAM superfamily. RlmN family. The cofactor is [4Fe-4S] cluster.

The protein resides in the cytoplasm. The enzyme catalyses adenosine(2503) in 23S rRNA + 2 reduced [2Fe-2S]-[ferredoxin] + 2 S-adenosyl-L-methionine = 2-methyladenosine(2503) in 23S rRNA + 5'-deoxyadenosine + L-methionine + 2 oxidized [2Fe-2S]-[ferredoxin] + S-adenosyl-L-homocysteine. The catalysed reaction is adenosine(37) in tRNA + 2 reduced [2Fe-2S]-[ferredoxin] + 2 S-adenosyl-L-methionine = 2-methyladenosine(37) in tRNA + 5'-deoxyadenosine + L-methionine + 2 oxidized [2Fe-2S]-[ferredoxin] + S-adenosyl-L-homocysteine. Functionally, specifically methylates position 2 of adenine 2503 in 23S rRNA and position 2 of adenine 37 in tRNAs. m2A2503 modification seems to play a crucial role in the proofreading step occurring at the peptidyl transferase center and thus would serve to optimize ribosomal fidelity. The chain is Dual-specificity RNA methyltransferase RlmN from Novosphingobium aromaticivorans (strain ATCC 700278 / DSM 12444 / CCUG 56034 / CIP 105152 / NBRC 16084 / F199).